Consider the following 93-residue polypeptide: Bacterial microcompartment shell protein PduA (93 aa).

A BMC domain is found at 5 to 89 (ALGMVETKGL…PHTDVEKILP (85 aa)).

Belongs to the bacterial microcompartments protein family. In terms of assembly, homohexamer with a central pore; Lys-26 and Arg-79 interactions are very important for hexamer symmetry. The hexamers pack against each other in arrays. Interacts individually with shell proteins PduB, PduB', PduJ, PduK, PduN and PduU. Modeling suggests PduC, PduD, PduE, PduL and PduP interact with a cleft formed by the C-terminal segments of 2 adjacent PduA subunits (on the BMC luminal side) in the hexamer.

The protein resides in the bacterial microcompartment. It functions in the pathway polyol metabolism; 1,2-propanediol degradation. Functionally, one of the major shell proteins of the bacterial microcompartment (BMC) dedicated to 1,2-propanediol (1,2-PD) degradation, probably important for metabolite diffusion into and out of the BMC. Overexpression of a C-terminally mutated form (PduA*) makes thin parallel filaments with a honeycomb-like assembly in cross-section that probably form nanotubes. The filaments interfere with septation. PduA is probably the hub for binding multiple enzymes to the interior of the BMC. At least one of PduA or PduJ is required for BMC assembly; it must be encoded as the first gene in the pdu operon. Its function is as follows. Expression of a cosmid containing the full 21-gene pdu operon in E.coli allows E.coli to grow on 1,2-PD with the appearance of BMCs in its cytoplasm. Overexpression of this protein leads to aberrant intracellular filaments. In terms of biological role, the 1,2-PD-specific bacterial microcompartment (BMC) concentrates low levels of 1,2-PD catabolic enzymes, concentrates volatile reaction intermediates thus enhancing pathway flux and keeps the level of toxic, mutagenic propionaldehyde low. This Citrobacter freundii protein is Bacterial microcompartment shell protein PduA.